The following is a 543-amino-acid chain: Probable protein kinase UbiB (543 aa).

The Protein kinase domain occupies 123 to 501 (DFDSQALASA…QQRQGQSRYL (379 aa)). Residues 129–137 (LASASIAQV) and lysine 152 contribute to the ATP site. Residue aspartate 287 is the Proton acceptor of the active site. The chain crosses the membrane as a helical span at residues 517–539 (LADATEVSTGFIVAGALAWFIGW).

It belongs to the ABC1 family. UbiB subfamily.

Its subcellular location is the cell inner membrane. It functions in the pathway cofactor biosynthesis; ubiquinone biosynthesis [regulation]. In terms of biological role, is probably a protein kinase regulator of UbiI activity which is involved in aerobic coenzyme Q (ubiquinone) biosynthesis. This chain is Probable protein kinase UbiB, found in Yersinia pseudotuberculosis serotype O:1b (strain IP 31758).